A 617-amino-acid chain; its full sequence is Dihydroxy-acid dehydratase (617 aa).

Asp81 serves as a coordination point for Mg(2+). Cys122 is a [2Fe-2S] cluster binding site. Asp123 and Lys124 together coordinate Mg(2+). Lys124 bears the N6-carboxylysine mark. [2Fe-2S] cluster is bound at residue Cys195. Mg(2+) is bound at residue Glu491. The active-site Proton acceptor is the Ser517.

Belongs to the IlvD/Edd family. In terms of assembly, homodimer. Requires [2Fe-2S] cluster as cofactor. Mg(2+) is required as a cofactor.

It carries out the reaction (2R)-2,3-dihydroxy-3-methylbutanoate = 3-methyl-2-oxobutanoate + H2O. The catalysed reaction is (2R,3R)-2,3-dihydroxy-3-methylpentanoate = (S)-3-methyl-2-oxopentanoate + H2O. It functions in the pathway amino-acid biosynthesis; L-isoleucine biosynthesis; L-isoleucine from 2-oxobutanoate: step 3/4. Its pathway is amino-acid biosynthesis; L-valine biosynthesis; L-valine from pyruvate: step 3/4. Functions in the biosynthesis of branched-chain amino acids. Catalyzes the dehydration of (2R,3R)-2,3-dihydroxy-3-methylpentanoate (2,3-dihydroxy-3-methylvalerate) into 2-oxo-3-methylpentanoate (2-oxo-3-methylvalerate) and of (2R)-2,3-dihydroxy-3-methylbutanoate (2,3-dihydroxyisovalerate) into 2-oxo-3-methylbutanoate (2-oxoisovalerate), the penultimate precursor to L-isoleucine and L-valine, respectively. This chain is Dihydroxy-acid dehydratase, found in Caulobacter vibrioides (strain ATCC 19089 / CIP 103742 / CB 15) (Caulobacter crescentus).